Reading from the N-terminus, the 157-residue chain is Ribosomal RNA large subunit methyltransferase H (157 aa).

Residues leucine 73, glycine 105, and 124-129 contribute to the S-adenosyl-L-methionine site; that span reads LSQMTF.

It belongs to the RNA methyltransferase RlmH family. As to quaternary structure, homodimer.

It is found in the cytoplasm. It catalyses the reaction pseudouridine(1915) in 23S rRNA + S-adenosyl-L-methionine = N(3)-methylpseudouridine(1915) in 23S rRNA + S-adenosyl-L-homocysteine + H(+). Its function is as follows. Specifically methylates the pseudouridine at position 1915 (m3Psi1915) in 23S rRNA. The protein is Ribosomal RNA large subunit methyltransferase H of Flavobacterium psychrophilum (strain ATCC 49511 / DSM 21280 / CIP 103535 / JIP02/86).